A 571-amino-acid chain; its full sequence is Proline--tRNA ligase (571 aa).

It belongs to the class-II aminoacyl-tRNA synthetase family. ProS type 1 subfamily. Homodimer.

It localises to the cytoplasm. It catalyses the reaction tRNA(Pro) + L-proline + ATP = L-prolyl-tRNA(Pro) + AMP + diphosphate. Its function is as follows. Catalyzes the attachment of proline to tRNA(Pro) in a two-step reaction: proline is first activated by ATP to form Pro-AMP and then transferred to the acceptor end of tRNA(Pro). As ProRS can inadvertently accommodate and process non-cognate amino acids such as alanine and cysteine, to avoid such errors it has two additional distinct editing activities against alanine. One activity is designated as 'pretransfer' editing and involves the tRNA(Pro)-independent hydrolysis of activated Ala-AMP. The other activity is designated 'posttransfer' editing and involves deacylation of mischarged Ala-tRNA(Pro). The misacylated Cys-tRNA(Pro) is not edited by ProRS. This is Proline--tRNA ligase from Proteus mirabilis (strain HI4320).